The sequence spans 227 residues: Transcription elongation factor A protein-like 2 (227 aa).

2 disordered regions span residues 1–145 (MEKL…TNKG) and 202–227 (FYPRGPREFRGGCRAPRRDTEDIPYV). 5 stretches are compositionally biased toward basic and acidic residues: residues 18–43 (IDNEEQPPHEGKPEVACILEDKKLEN), 50–82 (TGKRVEEPLKDKEKPESAGKAKGEGKSERKGKS), 90–113 (TEGKPERGGRAEGEGEPDSEREPE), 120–136 (SETRAAGKRPAEDDIPR), and 206–227 (GPREFRGGCRAPRRDTEDIPYV).

It belongs to the TFS-II family. TFA subfamily.

The protein resides in the nucleus. May be involved in transcriptional regulation. This chain is Transcription elongation factor A protein-like 2 (TCEAL2), found in Homo sapiens (Human).